Reading from the N-terminus, the 239-residue chain is Thymidylate kinase (239 aa).

An ATP-binding site is contributed by 10-17; sequence GINGVGKS.

It belongs to the thymidylate kinase family.

The enzyme catalyses dTMP + ATP = dTDP + ADP. It functions in the pathway pyrimidine metabolism; dTTP biosynthesis. In terms of biological role, catalyzes the conversion of dTMP to dTDP. This African swine fever virus (isolate Warthog/Namibia/Wart80/1980) (ASFV) protein is Thymidylate kinase (TMK).